We begin with the raw amino-acid sequence, 432 residues long: Serine hydroxymethyltransferase (432 aa).

Residues Leu-117 and 121–123 contribute to the (6S)-5,6,7,8-tetrahydrofolate site; that span reads GHL. Lys-226 carries the N6-(pyridoxal phosphate)lysine modification. 366–368 lines the (6S)-5,6,7,8-tetrahydrofolate pocket; the sequence is SPF.

It belongs to the SHMT family. In terms of assembly, homodimer. Pyridoxal 5'-phosphate serves as cofactor.

Its subcellular location is the cytoplasm. It carries out the reaction (6R)-5,10-methylene-5,6,7,8-tetrahydrofolate + glycine + H2O = (6S)-5,6,7,8-tetrahydrofolate + L-serine. Its pathway is one-carbon metabolism; tetrahydrofolate interconversion. It functions in the pathway amino-acid biosynthesis; glycine biosynthesis; glycine from L-serine: step 1/1. Functionally, catalyzes the reversible interconversion of serine and glycine with tetrahydrofolate (THF) serving as the one-carbon carrier. This reaction serves as the major source of one-carbon groups required for the biosynthesis of purines, thymidylate, methionine, and other important biomolecules. Also exhibits THF-independent aldolase activity toward beta-hydroxyamino acids, producing glycine and aldehydes, via a retro-aldol mechanism. This is Serine hydroxymethyltransferase from Salinibacter ruber (strain DSM 13855 / M31).